We begin with the raw amino-acid sequence, 434 residues long: UDP-glucose 6-dehydrogenase (434 aa).

NAD(+) is bound by residues 2–19, valine 11, aspartate 30, lysine 35, threonine 121, and glutamate 152; that span reads NITFIGSGYVGLVSGVMM. Substrate contacts are provided by residues 148–152, lysine 204, asparagine 208, 249–253, and glycine 257; these read EFLRE and FLNAG. Cysteine 260 serves as the catalytic Nucleophile. Lysine 263 contributes to the NAD(+) binding site. Position 321 (lysine 321) interacts with substrate. Position 328 (arginine 328) interacts with NAD(+).

It belongs to the UDP-glucose/GDP-mannose dehydrogenase family.

It carries out the reaction UDP-alpha-D-glucose + 2 NAD(+) + H2O = UDP-alpha-D-glucuronate + 2 NADH + 3 H(+). It participates in nucleotide-sugar biosynthesis; UDP-alpha-D-glucuronate biosynthesis; UDP-alpha-D-glucuronate from UDP-alpha-D-glucose: step 1/1. This Rickettsia bellii (strain RML369-C) protein is UDP-glucose 6-dehydrogenase (udg).